Reading from the N-terminus, the 129-residue chain is Fluoride-specific ion channel FluC 2 (129 aa).

The next 4 helical transmembrane spans lie at 3–23, 32–52, 59–79, and 90–110; these read FLYV…MNLW, ATLA…PFLA, LVLL…FSAF, and GEVV…LVMV. Na(+) is bound by residues glycine 71 and threonine 74.

Belongs to the fluoride channel Fluc/FEX (TC 1.A.43) family.

Its subcellular location is the cell membrane. The catalysed reaction is fluoride(in) = fluoride(out). Na(+) is not transported, but it plays an essential structural role and its presence is essential for fluoride channel function. Functionally, fluoride-specific ion channel. Important for reducing fluoride concentration in the cell, thus reducing its toxicity. This Listeria innocua serovar 6a (strain ATCC BAA-680 / CLIP 11262) protein is Fluoride-specific ion channel FluC 2.